The following is an 857-amino-acid chain: Thiamine repressible genes regulatory protein thi5 (857 aa).

The zn(2)-C6 fungal-type DNA-binding region spans 38–64 (CLSCRAKKIRCSGSEPCQACIATPSQC). 2 disordered regions span residues 152–175 (AVKSANVSFPSSSTPPSSDSNFSS) and 797–819 (GHALGNPESNNSSNSFKPSHPSQ). Residues 159–175 (SFPSSSTPPSSDSNFSS) are compositionally biased toward low complexity. The segment covering 803 to 819 (PESNNSSNSFKPSHPSQ) has biased composition (polar residues).

It localises to the nucleus. Its function is as follows. Transcription factor that activates the nmt1 promoter. Regulation of thiamine repressible genes. Negatively regulates conjugation during meiosis, by inducing negative regulators which delay conjugation. Involved in thi1 regulation. This is Thiamine repressible genes regulatory protein thi5 (thi5) from Schizosaccharomyces pombe (strain 972 / ATCC 24843) (Fission yeast).